Reading from the N-terminus, the 274-residue chain is Dermonecrotic toxin SdSicTox-betaIIB1biv (274 aa).

H5 is an active-site residue. E25 and D27 together coordinate Mg(2+). H41 functions as the Nucleophile in the catalytic mechanism. Cystine bridges form between C45–C51 and C47–C190. Residue D85 participates in Mg(2+) binding.

Belongs to the arthropod phospholipase D family. Class II subfamily. It depends on Mg(2+) as a cofactor. As to expression, expressed by the venom gland.

It localises to the secreted. It catalyses the reaction an N-(acyl)-sphingosylphosphocholine = an N-(acyl)-sphingosyl-1,3-cyclic phosphate + choline. It carries out the reaction an N-(acyl)-sphingosylphosphoethanolamine = an N-(acyl)-sphingosyl-1,3-cyclic phosphate + ethanolamine. The enzyme catalyses a 1-acyl-sn-glycero-3-phosphocholine = a 1-acyl-sn-glycero-2,3-cyclic phosphate + choline. The catalysed reaction is a 1-acyl-sn-glycero-3-phosphoethanolamine = a 1-acyl-sn-glycero-2,3-cyclic phosphate + ethanolamine. Functionally, dermonecrotic toxins cleave the phosphodiester linkage between the phosphate and headgroup of certain phospholipids (sphingolipid and lysolipid substrates), forming an alcohol (often choline) and a cyclic phosphate. This toxin acts on sphingomyelin (SM). It may also act on ceramide phosphoethanolamine (CPE), lysophosphatidylcholine (LPC) and lysophosphatidylethanolamine (LPE), but not on lysophosphatidylserine (LPS), and lysophosphatidylglycerol (LPG). It acts by transphosphatidylation, releasing exclusively cyclic phosphate products as second products. Induces dermonecrosis, hemolysis, increased vascular permeability, edema, inflammatory response, and platelet aggregation. The chain is Dermonecrotic toxin SdSicTox-betaIIB1biv from Sicarius cf. damarensis (strain GJB-2008) (Six-eyed sand spider).